Here is a 939-residue protein sequence, read N- to C-terminus: Isoleucine--tRNA ligase (939 aa).

The short motif at 57–67 is the 'HIGH' region element; the sequence is PYANGHIHIGH. Position 563 (Glu-563) interacts with L-isoleucyl-5'-AMP. The 'KMSKS' region motif lies at 604-608; the sequence is KMSKS. Lys-607 is an ATP binding site. The Zn(2+) site is built by Cys-903, Cys-906, Cys-921, and Cys-924.

Belongs to the class-I aminoacyl-tRNA synthetase family. IleS type 1 subfamily. Monomer. The cofactor is Zn(2+).

It is found in the cytoplasm. The enzyme catalyses tRNA(Ile) + L-isoleucine + ATP = L-isoleucyl-tRNA(Ile) + AMP + diphosphate. Catalyzes the attachment of isoleucine to tRNA(Ile). As IleRS can inadvertently accommodate and process structurally similar amino acids such as valine, to avoid such errors it has two additional distinct tRNA(Ile)-dependent editing activities. One activity is designated as 'pretransfer' editing and involves the hydrolysis of activated Val-AMP. The other activity is designated 'posttransfer' editing and involves deacylation of mischarged Val-tRNA(Ile). This is Isoleucine--tRNA ligase from Sulfurihydrogenibium sp. (strain YO3AOP1).